Reading from the N-terminus, the 55-residue chain is Spermatid nuclear transition protein 1 (55 aa).

Residues M1 to K42 are compositionally biased toward basic residues. Residues M1–L55 are disordered. Phosphoserine occurs at positions 36, 37, and 40.

The protein belongs to the nuclear transition protein 1 family. Testis.

Its subcellular location is the nucleus. The protein localises to the chromosome. Its function is as follows. Plays a key role in the replacement of histones to protamine in the elongating spermatids of mammals. In condensing spermatids, loaded onto the nucleosomes, where it promotes the recruitment and processing of protamines, which are responsible for histone eviction. This chain is Spermatid nuclear transition protein 1 (Tnp1), found in Rattus norvegicus (Rat).